The following is a 254-amino-acid chain: 3-deoxy-manno-octulosonate cytidylyltransferase (254 aa).

Belongs to the KdsB family.

It is found in the cytoplasm. The catalysed reaction is 3-deoxy-alpha-D-manno-oct-2-ulosonate + CTP = CMP-3-deoxy-beta-D-manno-octulosonate + diphosphate. Its pathway is nucleotide-sugar biosynthesis; CMP-3-deoxy-D-manno-octulosonate biosynthesis; CMP-3-deoxy-D-manno-octulosonate from 3-deoxy-D-manno-octulosonate and CTP: step 1/1. In terms of biological role, activates KDO (a required 8-carbon sugar) for incorporation into bacterial lipopolysaccharide in Gram-negative bacteria. The chain is 3-deoxy-manno-octulosonate cytidylyltransferase from Lawsonia intracellularis (strain PHE/MN1-00).